The primary structure comprises 442 residues: UDP-glycosyltransferase 79B7 (442 aa).

UDP-alpha-D-glucose-binding positions include Ser260, 319 to 321 (VQQ), 336 to 344 (HCGPGTIWE), and 358 to 361 (LSDQ).

The protein belongs to the UDP-glycosyltransferase family.

This is UDP-glycosyltransferase 79B7 (UGT79B7) from Arabidopsis thaliana (Mouse-ear cress).